A 175-amino-acid polypeptide reads, in one-letter code: Inorganic pyrophosphatase (175 aa).

Substrate-binding residues include lysine 30, arginine 44, and tyrosine 56. Mg(2+) contacts are provided by aspartate 66, aspartate 71, and aspartate 103. Tyrosine 142 serves as a coordination point for substrate.

This sequence belongs to the PPase family. As to quaternary structure, homohexamer. Requires Mg(2+) as cofactor.

Its subcellular location is the cytoplasm. It catalyses the reaction diphosphate + H2O = 2 phosphate + H(+). Catalyzes the hydrolysis of inorganic pyrophosphate (PPi) forming two phosphate ions. The sequence is that of Inorganic pyrophosphatase from Haemophilus ducreyi (strain 35000HP / ATCC 700724).